We begin with the raw amino-acid sequence, 180 residues long: Lysine-specific demethylase 5C (180 aa).

Positions 116–159 (PEESLAYSSDAGEGAGHIPKVQGLLENGDSVTSPEKVATEEGSG) are disordered. At serine 148 the chain carries Phosphoserine.

This sequence belongs to the JARID1 histone demethylase family. In terms of assembly, part of two distinct complexes, one containing E2F6, and the other containing REST. Interacts with ZMYND8. The cofactor is Fe(2+).

The protein resides in the nucleus. It catalyses the reaction N(6),N(6),N(6)-trimethyl-L-lysyl(4)-[histone H3] + 3 2-oxoglutarate + 3 O2 = L-lysyl(4)-[histone H3] + 3 formaldehyde + 3 succinate + 3 CO2. Its function is as follows. Histone demethylase that specifically demethylates 'Lys-4' of histone H3, thereby playing a central role in histone code. Does not demethylate histone H3 'Lys-9', H3 'Lys-27', H3 'Lys-36', H3 'Lys-79' or H4 'Lys-20'. Demethylates trimethylated and dimethylated but not monomethylated H3 'Lys-4'. Participates in transcriptional repression of neuronal genes by recruiting histone deacetylases and REST at neuron-restrictive silencer elements. Represses the CLOCK-BMAL1 heterodimer-mediated transcriptional activation of the core clock component PER2. The polypeptide is Lysine-specific demethylase 5C (KDM5C) (Cricetulus griseus (Chinese hamster)).